Here is a 2873-residue protein sequence, read N- to C-terminus: MRRGGLLEVALAFALLLESYTSHGADANLEAGSLKETRANRAKRRGGGGHDALKGPNVCGSRYNAYCCPGWKTLPGGNQCIVPICRHSCGDGFCSRPNMCTCPSGQISPSCGSRSIQHCSIRCMNGGSCSDDHCLCQKGYIGTHCGQPVCESGCLNGGRCVAPNRCACTYGFTGPQCERDYRTGPCFTVVSNQMCQGQLSGIVCTKTLCCATVGRAWGHPCEMCPAQPHPCRRGFIPNIRTGACQDVDECQAIPGMCQGGNCINTVGSFECKCPAGHKFNEVSQKCEDIDECSTIPGVCDGGECTNTVSSYFCKCPPGFYTSPDGTRCVDVRPGYCYTALANGRCSNQLPQSITKMQCCCDLGRCWSPGVTVAPEMCPIRSTEDFNKLCSVPLVIPGRPEYPPPPIGPLPPVQPVPPGYPPGPVIPAPRPPPEYPYPSPSREPPRVLPFNVTDYCQLVRYLCQNGRCIPTPGSYRCECNKGFQLDIRGECIDVDECEKNPCTGGECINNQGSYTCHCRAGYQSTLTRTECRDIDECLQNGRICNNGRCINTDGSFHCVCNAGFHVTRDGKNCEDMDECSIRNMCLNGMCINEDGSFKCICKPGFQLASDGRYCKDINECETPGICMNGRCVNTDGSYRCECFPGLAVGLDGRVCVDTHMRSTCYGGYRRGQCVKPLFGAVTKSECCCASTEYAFGEPCQPCPAQNSAEYQALCSSGPGMTSAGTDINECALDPDICPNGICENLRGTYKCICNSGYEVDITGKNCVDINECVLNSLLCDNGQCRNTPGSFVCTCPKGFVYKPDLKTCEDIDECESSPCINGVCKNSPGSFICECSPESTLDPTKTICIETIKGTCWQTVIDGRCEININGATLKSECCSSLGAAWGSPCTICQLDPICGKGFSRIKGTQCEDINECEVFPGVCKNGLCVNSRGSFKCECPNGMTLDATGRICLDIRLETCFLKYDDEECTLPIAGRHRMDACCCSVGAAWGTEECEECPLRNSREYEELCPRGPGFATKDITNGKPFFKDINECKMIPSLCTHGKCRNTIGSFKCRCDSGFALDSEERNCTDIDECRISPDLCGRGQCVNTPGDFECKCDEGYESGFMMMKNCMDIDECQRDPLLCRGGICHNTEGSYRCECPPGHQLSPNISACIDINECELSANLCPHGRCVNLIGKYQCACNPGYHPTHDRLFCVDIDECSIMNGGCETFCTNSDGSYECSCQPGFALMPDQRSCTDIDECEDNPNICDGGQCTNIPGEYRCLCYDGFMASEDMKTCVDVNECDLNPNICLSGTCENTKGSFICHCDMGYSGKKGKTGCTDINECEIGAHNCGRHAVCTNTAGSFKCSCSPGWIGDGIKCTDLDECSNGTHMCSQHADCKNTMGSYRCLCKDGYTGDGFTCTDLDECSENLNLCGNGQCLNAPGGYRCECDMGFVPSADGKACEDIDECSLPNICVFGTCHNLPGLFRCECEIGYELDRSGGNCTDVNECLDPTTCISGNCVNTPGSYTCDCPPDFELNPTRVGCVDTRSGNCYLDIRPRGDNGDTACSNEIGVGVSKASCCCSLGKAWGTPCELCPSVNTSEYKILCPGGEGFRPNPITVILEDIDECQELPGLCQGGKCINTFGSFQCRCPTGYYLNEDTRVCDDVNECETPGICGPGTCYNTVGNYTCICPPDYMQVNGGNNCMDMRRSLCYRNYYADNQTCDGELLFNMTKKMCCCSYNIGRAWNKPCEQCPIPSTDEFATLCGSQRPGFVIDIYTGLPVDIDECREIPGVCENGVCINMVGSFRCECPVGFFYNDKLLVCEDIDECQNGPVCQRNAECINTAGSYRCDCKPGYRLTSTGQCNDRNECQEIPNICSHGQCIDTVGSFYCLCHTGFKTNVDQTMCLDINECERDACGNGTCRNTIGSFNCRCNHGFILSHNNDCIDVDECATGNGNLCRNGQCVNTVGSFQCRCNEGYEVAPDGRTCVDINECVLDPGKCAPGTCQNLDGSYRCICPPGYSLQNDKCEDIDECVEEPEICALGTCSNTEGSFKCLCPEGFSLSSTGRRCQDLRMSYCYAKFEGGKCSSPKSRNHSKQECCCALKGEGWGDPCELCPTEPDEAFRQICPFGSGIIVGPDDSAVDMDECKEPDVCRHGQCINTDGSYRCECPFGYILEGNECVDTDECSVGNPCGNGTCKNVIGGFECTCEEGFEPGPMMTCEDINECAQNPLLCAFRCVNTYGSYECKCPVGYVLREDRRMCKDEDECAEGKHDCTEKQMECKNLIGTYMCICGPGYQRRPDGEGCIDENECQTKPGICENGRCLNTLGSYTCECNDGFTASPTQDECLDNREGYCFSEVLQNMCQIGSSNRNPVTKSECCCDGGRGWGPHCEICPFEGTVAYKKLCPHGRGFMTNGADIDECKVIHDVCRNGECVNDRGSYHCICKTGYTPDITGTACVDLNECNQAPKPCNFICKNTEGSYQCSCPKGYILQEDGRSCKDLDECATKQHNCQFLCVNTIGGFTCKCPPGFTQHHTACIDNNECTSDINLCGSKGVCQNTPGSFTCECQRGFSLDQSGASCEDVDECEGNHRCQHGCQNIIGGYRCSCPQGYLQHYQWNQCVDENECLSAHVCGGASCHNTLGSYKCMCPTGFQYEQFSGGCQDINECGSSQAPCSYGCSNTEGGYLCGCPPGYFRIGQGHCVSGMGMGRGGPEPPASSEMDDNSLSPEACYECKINGYPKRGRKRRSTNETDASDIQDGSEMEANVSLASWDVEKPASFAFNISHVNNKVRILELLPALTTLMNHNRYLIESGNEDGFFKINQKEGVSYLHFTKKKPVAGTYSLQISSTPLYKKKELNQLEDRYDKDYLSGELGDNLKMKIQILLH.

Positions M1–G24 are cleaved as a signal peptide. A propeptide spanning residues A25–R44 is cleaved from the precursor. A fibrillin unique N-terminal (FUN) domain region spans residues R45–I81. The segment at R45–T452 is N-terminal domain. Disulfide bonds link C59–C68, C67–C80, C85–C94, C89–C100, C102–C111, C119–C129, C123–C134, C136–C145, C150–C160, C154–C166, and C168–C177. 3 consecutive EGF-like domains span residues I81 to G112, S115 to G146, and Q147 to E178. Residues C119–V329 form an interaction with MFAP4 region. Residues G184–I236 form the TB 1 domain. The segment at C195 to C221 is hybrid domain 1. The region spanning D246–E287 is the EGF-like 4; calcium-binding domain. Disulfide bonds link C250–C262, C257–C271, C273–C286, C292–C304, C299–C313, and C315–C328. S268 carries O-linked (Glc) serine glycosylation. Residues D288 to V329 enclose the EGF-like 5; calcium-binding domain. Positions G334–C389 constitute a TB 2 domain. N-linked (GlcNAc...) asparagine glycosylation occurs at N450. The EGF-like 6 domain occupies V451–I491. Cystine bridges form between C455–C467, C462–C476, C478–C490, C496–C506, C501–C515, C517–C530, C536–C548, C543–C557, C559–C572, C578–C589, C584–C598, C600–C613, C619–C630, C625–C639, and C641–C654. S473 carries O-linked (Glc) serine glycosylation. In terms of domain architecture, EGF-like 7; calcium-binding spans D492–R531. Residue S512 is glycosylated (O-linked (Glc) serine). An EGF-like 8; calcium-binding domain is found at D532 to E573. In terms of domain architecture, EGF-like 9; calcium-binding spans D574–K614. Residues D615–V655 enclose the EGF-like 10; calcium-binding domain. Residues S661–C713 enclose the TB 3 domain. Positions D725–V766 constitute an EGF-like 11; calcium-binding domain. 16 cysteine pairs are disulfide-bonded: C729-C741, C736-C750, C752-C765, C771-C783, C778-C792, C794-C807, C813-C823, C818-C832, C834-C847, C855-C877, C864-C889, C878-C892, C898-C910, C916-C928, C923-C937, and C939-C952. The 42-residue stretch at D767–E808 folds into the EGF-like 12; calcium-binding domain. An EGF-like 13; calcium-binding domain is found at D809–I848. The 52-residue stretch at G853–R904 folds into the TB 4 domain. Positions G862–S887 are hybrid domain 2. Positions D912–L953 constitute an EGF-like 14; calcium-binding domain. Residues E958–C1010 enclose the TB 5 domain. The region spanning D1030–T1071 is the EGF-like 15; calcium-binding domain. 46 disulfides stabilise this stretch: C1034-C1046, C1041-C1055, C1057-C1070, C1076-C1088, C1083-C1097, C1099-C1113, C1119-C1131, C1126-C1140, C1142-C1155, C1161-C1173, C1168-C1182, C1184-C1197, C1203-C1214, C1210-C1223, C1225-C1238, C1244-C1256, C1251-C1265, C1267-C1280, C1286-C1298, C1293-C1307, C1309-C1322, C1328-C1341, C1335-C1350, C1352-C1363, C1369-C1382, C1376-C1391, C1393-C1404, C1410-C1422, C1417-C1431, C1433-C1446, C1452-C1463, C1458-C1472, C1474-C1487, C1493-C1504, C1499-C1513, C1515-C1528, C1536-C1564, C1551-C1576, C1565-C1579, C1566-C1591, C1612-C1624, C1619-C1633, C1635-C1648, C1654-C1665, C1660-C1674, and C1676-C1689. N-linked (GlcNAc...) asparagine glycosylation is present at N1069. The region spanning D1072–M1114 is the EGF-like 16; calcium-binding domain. An EGF-like 17; calcium-binding domain is found at D1115–I1156. O-linked (Glc) serine glycosylation is present at S1137. The N-linked (GlcNAc...) asparagine glycan is linked to N1151. The EGF-like 18; calcium-binding domain occupies D1157–V1198. One can recognise an EGF-like 19; calcium-binding domain in the interval D1199–T1239. S1220 carries an O-linked (Glc) serine glycan. The region spanning D1240–V1281 is the EGF-like 20; calcium-binding domain. An EGF-like 21; calcium-binding domain is found at D1282–T1323. S1304 carries an O-linked (Glc) serine glycan. The EGF-like 22; calcium-binding domain occupies D1324 to T1364. S1347 is a glycosylation site (O-linked (Glc) serine). The 41-residue stretch at D1365–T1405 folds into the EGF-like 23; calcium-binding domain. N-linked (GlcNAc...) asparagine glycosylation is present at N1371. An O-linked (Glc) serine glycan is attached at S1388. The EGF-like 24; calcium-binding domain occupies D1406–E1447. The 41-residue stretch at D1448 to T1488 folds into the EGF-like 25; calcium-binding domain. An N-linked (GlcNAc...) asparagine glycan is attached at N1486. The EGF-like 26; calcium-binding domain occupies D1489–V1529. Residue S1510 is glycosylated (O-linked (Glc) serine). The interval D1530–R2733 is C-terminal domain. Residues G1534–C1591 enclose the TB 6 domain. The short motif at R1543 to D1545 is the Cell attachment site element. N-linked (GlcNAc...) asparagine glycosylation occurs at N1583. The EGF-like 27; calcium-binding domain maps to D1608–D1649. S1630 carries an O-linked (Glc) serine glycan. The EGF-like 28; calcium-binding domain occupies D1650–M1690. N-linked (GlcNAc...) asparagine glycosylation occurs at N1671. Residues S1695–C1750 form the TB 7 domain. Residues N1705 and N1715 are each glycosylated (N-linked (GlcNAc...) asparagine). The region spanning D1768 to E1809 is the EGF-like 29; calcium-binding domain. 40 disulfides stabilise this stretch: C1772/C1784, C1779/C1793, C1795/C1808, C1814/C1826, C1820/C1835, C1837/C1849, C1855/C1867, C1862/C1876, C1878/C1891, C1897/C1907, C1902/C1916, C1918/C1930, C1936/C1949, C1944/C1958, C1960/C1973, C1979/C1991, C1986/C2000, C2002/C2013, C2019/C2031, C2026/C2040, C2042/C2055, C2063/C2085, C2072/C2098, C2086/C2101, C2087/C2113, C2133/C2144, C2139/C2153, C2155/C2166, C2172/C2183, C2178/C2192, C2194/C2206, C2212/C2223, C2219/C2232, C2234/C2247, C2253/C2267, C2260/C2276, C2278/C2291, C2297/C2309, C2304/C2318, and C2320/C2333. The EGF-like 30; calcium-binding domain maps to D1810 to N1850. A glycan (O-linked (Glc) serine) is linked at S1832. The region spanning D1851–L1892 is the EGF-like 31; calcium-binding domain. Residue S1873 is glycosylated (O-linked (Glc) serine). The EGF-like 32; calcium-binding domain occupies D1893–I1931. A glycan (N-linked (GlcNAc...) asparagine) is linked at N1904. S1913 is a glycosylation site (O-linked (Glc) serine). Residues D1932–V1974 enclose the EGF-like 33; calcium-binding domain. An O-linked (Glc) serine glycan is attached at S1955. Residues D1975–E2014 enclose the EGF-like 34; calcium-binding domain. The region spanning D2015–Q2056 is the EGF-like 35; calcium-binding domain. Residue S2037 is glycosylated (O-linked (Glc) serine). Positions S2061 to C2113 constitute a TB 8 domain. N-linked (GlcNAc...) asparagine glycosylation occurs at N2079. The region spanning D2129 to V2167 is the EGF-like 36; calcium-binding domain. S2150 carries an O-linked (Glc) serine glycan. Positions D2168–E2207 constitute an EGF-like 37; calcium-binding domain. The N-linked (GlcNAc...) asparagine glycan is linked to N2180. An EGF-like 38; calcium-binding domain is found at D2208 to K2248. O-linked (Glc) serine glycosylation is present at S2229. In terms of domain architecture, EGF-like 39; calcium-binding spans D2249–I2292. The region spanning D2293–L2334 is the EGF-like 40; calcium-binding domain. The O-linked (Glc) serine glycan is linked to S2315. Residues G2339–C2392 form the TB 9 domain. Residues D2404 to V2445 enclose the EGF-like 41; calcium-binding domain. Cystine bridges form between C2408–C2420, C2415–C2429, C2431–C2444, C2450–C2461, C2457–C2470, C2472–C2485, C2491–C2502, C2498–C2511, C2513–C2524, C2530–C2543, C2537–C2552, C2554–C2567, C2573–C2583, C2579–C2592, C2594–C2607, C2613–C2624, C2619–C2633, C2635–C2648, C2654–C2665, C2661–C2674, and C2676–C2688. The EGF-like 42; calcium-binding domain maps to D2446–K2486. A glycan (O-linked (Glc) serine) is linked at S2467. Residues D2487–I2525 enclose the EGF-like 43; calcium-binding domain. Residues D2526–E2568 enclose the EGF-like 44; calcium-binding domain. O-linked (Glc) serine glycosylation is present at S2549. An EGF-like 45; calcium-binding domain is found at D2569–V2608. The region spanning D2609–Q2649 is the EGF-like 46; calcium-binding domain. S2630 carries O-linked (Glc) serine glycosylation. One can recognise an EGF-like 47; calcium-binding domain in the interval D2650 to V2689. S2704, S2705, and S2711 each carry phosphoserine. The disordered stretch occupies residues R2728–S2747. N-linked (GlcNAc...) asparagine glycans are attached at residues N2736, N2752, and N2769.

This sequence belongs to the fibrillin family. As to quaternary structure, interacts with COL16A1. Interacts with integrin alpha-V/beta-3. Interacts with ADAMTS10; this interaction promotes microfibril assembly. Interacts with THSD4; this interaction promotes fibril formation. Interacts (via N-terminal domain) with FBLN2 and FBLN5. Interacts with ELN. Forms a ternary complex with ELN and FBLN2 or FBLN5 and a significant interaction with ELN seen only in the presence of FBLN2 or FBLN5. Interacts (via N-terminal domain) with LTBP2 (via C-terminal domain) in a Ca(+2)-dependent manner. Interacts (via N-terminal domain) with LTBP1 (via C-terminal domain). Interacts with integrins ITGA5:ITGB1, ITGAV:ITGB3 and ITGAV:ITGB6. Interacts (via N-terminal domain) with BMP2, BMP4, BMP7, BMP10 and GDF5. Interacts (via N-terminal domain) with MFAP2 and MFAP5. Interacts with ADAMTSL5. Interacts with MFAP4. Interacts (via N-terminal domain) with TNFSF11 in a Ca(+2)-dependent manner. Interacts (via N-terminal domain) with EFEMP2; this interaction inhibits EFEMP2 binding to LOX and ELN. In terms of processing, cleavage of N- and C-terminus by furin is required for incorporation into the extracellular matrix and assembly into microfibrils. The C-terminus, which corresponds to the Asprosin chain, was initially thought to constitute a propeptide. Fibrillin-1 and Asprosin chains are still linked together during the secretion from cells, but are subsequently separated by furin, an essential step for incorporation of Fibrillin-1 into the nascent microfibrils. Post-translationally, forms intermolecular disulfide bonds either with other fibrillin-1 molecules or with other components of the microfibrils. O-glycosylated on serine residues by POGLUT2 and POGLUT3 which is necessary for efficient protein secretion. As to expression, strongly expressed during the first week of osteoblast differentiation. Secreted by white adipose tissue (at protein level).

It localises to the secreted. Its subcellular location is the extracellular space. It is found in the extracellular matrix. Its function is as follows. Structural component of the 10-12 nm diameter microfibrils of the extracellular matrix, which conveys both structural and regulatory properties to load-bearing connective tissues. Fibrillin-1-containing microfibrils provide long-term force bearing structural support. In tissues such as the lung, blood vessels and skin, microfibrils form the periphery of the elastic fiber, acting as a scaffold for the deposition of elastin. In addition, microfibrils can occur as elastin-independent networks in tissues such as the ciliary zonule, tendon, cornea and glomerulus where they provide tensile strength and have anchoring roles. Fibrillin-1 also plays a key role in tissue homeostasis through specific interactions with growth factors, such as the bone morphogenetic proteins (BMPs), growth and differentiation factors (GDFs) and latent transforming growth factor-beta-binding proteins (LTBPs), cell-surface integrins and other extracellular matrix protein and proteoglycan components. Regulates osteoblast maturation by controlling TGF-beta bioavailability and calibrating TGF-beta and BMP levels, respectively. Negatively regulates osteoclastogenesis by binding and sequestering an osteoclast differentiation and activation factor TNFSF11. This leads to disruption of TNFSF11-induced Ca(2+) signaling and impairment of TNFSF11-mediated nuclear translocation and activation of transcription factor NFATC1 which regulates genes important for osteoclast differentiation and function. Mediates cell adhesion via its binding to cell surface receptors integrins ITGAV:ITGB3 and ITGA5:ITGB1. Binds heparin and this interaction plays an important role in the assembly of microfibrils. In terms of biological role, adipokine secreted by white adipose tissue that plays an important regulatory role in the glucose metabolism of liver, muscle and pancreas. Hormone that targets the liver in response to fasting to increase plasma glucose levels. Binds the olfactory receptor Olfr734 at the surface of hepatocytes and promotes hepatocyte glucose release by activating the protein kinase A activity in the liver, resulting in rapid glucose release into the circulation. May act as a regulator of adaptive thermogenesis by inhibiting browning and energy consumption, while increasing lipid deposition in white adipose tissue. Also acts as an orexigenic hormone that increases appetite: crosses the blood brain barrier and exerts effects on the hypothalamus. In the arcuate nucleus of the hypothalamus, asprosin directly activates orexigenic AgRP neurons and indirectly inhibits anorexigenic POMC neurons, resulting in appetite stimulation. Activates orexigenic AgRP neurons via binding to the olfactory receptor Olfr734. May also play a role in sperm motility in testis via interaction with Olfr734 receptor. The protein is Fibrillin-1 of Mus musculus (Mouse).